We begin with the raw amino-acid sequence, 511 residues long: Limonoid UDP-glucosyltransferase (511 aa).

Catalysis depends on histidine 19, which acts as the Proton acceptor. Histidine 19 contacts an anthocyanidin. UDP-alpha-D-glucose is bound by residues glutamine 344, histidine 359, tryptophan 362, asparagine 363, serine 364, and glutamate 367. Glycine 382 lines the an anthocyanidin pocket. UDP-alpha-D-glucose is bound by residues aspartate 383 and glutamine 384.

The protein belongs to the UDP-glycosyltransferase family.

It carries out the reaction limonin + UDP-alpha-D-glucose + H2O = limonin 17-beta-D-glucoside + UDP + 2 H(+). In terms of biological role, involved in the glucosylation of limonoids. This Citrus unshiu (Satsuma mandarin) protein is Limonoid UDP-glucosyltransferase.